The primary structure comprises 1113 residues: Atrial natriuretic peptide-converting enzyme (1113 aa).

Topologically, residues 1 to 112 are cytoplasmic; the sequence is MGRVSFSVRV…QKLVTANLLR (112 aa). Residues 113–133 form a helical; Signal-anchor for type II membrane protein membrane-spanning segment; sequence FLLLVLIPCICALIVLLAILL. Topologically, residues 134–1113 are extracellular; it reads SFVGTLKRVY…QTFLQKKSQG (980 aa). 3 N-linked (GlcNAc...) asparagine glycosylation sites follow: N147, N202, and N208. A disordered region spans residues 176-202; it reads APSLPPSQSTPAWTPRAPSPEDQSHRN. One can recognise an FZ 1 domain in the interval 201 to 327; the sequence is RNTSTCMNIT…SSVRKSCFSL (127 aa). Disulfide bonds link C206–C266, C214–C259, C250–C290, C279–C324, C283–C307, C337–C350, C345–C363, and C357–C372. N-linked (GlcNAc...) asparagine glycosylation is found at N298 and N317. LDL-receptor class A domains lie at 336–372, 373–408, 409–445, and 446–483; these read LCGG…EAHC, NCSK…EQNC, DCNL…EVNC, and SCHS…ENCS. An N-linked (GlcNAc...) asparagine glycan is attached at N373. Disulfide bonds link C374-C386, C381-C399, C393-C408, C410-C423, C418-C436, C430-C445, C447-C460, C455-C473, and C467-C482. N411 is a glycosylation site (N-linked (GlcNAc...) asparagine). N444 is a glycosylation site (N-linked (GlcNAc...) asparagine). N-linked (GlcNAc...) asparagine glycans are attached at residues N481, N519, and N537. The region spanning 518–641 is the FZ 2 domain; that stretch reads SNCSQCEPIT…SSDNQTCLLP (124 aa). 14 cysteine pairs are disulfide-bonded: C523–C586, C531–C579, C570–C608, C597–C638, C601–C625, C648–C660, C655–C673, C667–C682, C684–C698, C692–C711, C705–C720, C723–C735, C730–C748, and C742–C757. Residue N635 is glycosylated (N-linked (GlcNAc...) asparagine). LDL-receptor class A domains are found at residues 647 to 682, 683 to 721, and 722 to 757; these read ECSP…EENC, GCKE…KNCS, and FCQD…EWGC. N-linked (GlcNAc...) asparagine glycosylation is present at N719. One can recognise an SRCR domain in the interval 758–853; the sequence is VTLSKNGNSS…SRSEISLLCS (96 aa). Residues N765 and N828 are each glycosylated (N-linked (GlcNAc...) asparagine). Cystine bridges form between C782/C884, C857/C979, C895/C911, C993/C1058, C1022/C1037, and C1048/C1077. The Peptidase S1 domain maps to 869–1102; sequence ILGGRTSRPG…FVGWIERQIY (234 aa). Active-site charge relay system residues include H910 and D959. An N-linked (GlcNAc...) asparagine glycan is attached at N970. The Charge relay system role is filled by S1052. N1089 is a glycosylation site (N-linked (GlcNAc...) asparagine).

The protein belongs to the peptidase S1 family. N-glycosylated; required for processing and activation. In terms of processing, activated through proteolytic processing by a trypsin-like protease; cleaved into a N-terminal propeptide and an activated corin protease fragment. Atrial natriuretic peptide-converting enzyme, 180 kDa soluble fragment is produced by cleavage by ADAM10. Cleavage by ADAM10 to produce soluble 180 kDa soluble fragment takes place after the transmembrane region and before FZ 1. Post-translationally, a disulfide bond links the activated corin protease fragment and the N-terminal propeptide. The disulfide bond also links the activated corin protease fragment with Atrial natriuretic peptide-converting enzyme, 180 kDa soluble fragment. As to expression, highly expressed in heart. Also expressed in pregnant uterus.

Its subcellular location is the cell membrane. It is found in the secreted. Serine-type endopeptidase involved in atrial natriuretic peptide (NPPA) processing. Converts through proteolytic cleavage the non-functional propeptide NPPA into the active hormone, thereby regulating blood pressure in heart and promoting natriuresis, diuresis and vasodilation. Proteolytic cleavage of pro-NPPA also plays a role in female pregnancy by promoting trophoblast invasion and spiral artery remodeling in uterus. Also acts as a regulator of sodium reabsorption in kidney. May also process pro-NPPB the B-type natriuretic peptide. The sequence is that of Atrial natriuretic peptide-converting enzyme (Corin) from Mus musculus (Mouse).